We begin with the raw amino-acid sequence, 905 residues long: Coatomer subunit beta' (905 aa).

WD repeat units follow at residues 13-52 (ARSDRVKSVDLHPTEPWMLASLYNGSVCVWNHETQTLVKT), 55-94 (VCDLPVRAAKFVARKNWVVTGADDMQIRVFNYNTLERVHM), 97-136 (AHSDYIRCIAVHPTQPFILTSSDDMLIKLWDWDKKWSCSQ), 140-180 (GHTH…PNFT), 183-224 (GHEK…CVQT), 227-266 (GHAQNVSCASFHPELPIIITGSEDGTVRIWHSSTYRLEST), 350-388 (SCEIYPQTIQHNPNGRFVVVCGDGEYIIYTAMALRNKSF), and 390-425 (SAQEFAWAHDSSEYAIRESNSIVKIFKNFKEKKSFK). N6-acetyllysine is present on K627. One copy of the WD 9 repeat lies at 746 to 783 (IRTGRLPEAAFLARTYLPSQVSRVVKLWRENLSKVNQK). The tract at residues 837–873 (EEAKGFQPSRPTAQQEPDGKPASSPVIMASQTTHKEE) is disordered. Residue S859 is modified to Phosphoserine. Residues 867–891 (QTTHKEEKSLLELEVDLDNLELEDI) adopt a coiled-coil conformation.

Belongs to the WD repeat COPB2 family. Oligomeric complex that consists of at least the alpha, beta, beta', gamma, delta, epsilon and zeta subunits. Probably interacts with PEX11A. Interacts with SCYL1. Interacts with JAGN1.

It localises to the cytoplasm. It is found in the cytosol. The protein resides in the golgi apparatus membrane. The protein localises to the cytoplasmic vesicle. Its subcellular location is the COPI-coated vesicle membrane. Its function is as follows. The coatomer is a cytosolic protein complex that binds to dilysine motifs and reversibly associates with Golgi non-clathrin-coated vesicles, which further mediate biosynthetic protein transport from the ER, via the Golgi up to the trans Golgi network. Coatomer complex is required for budding from Golgi membranes, and is essential for the retrograde Golgi-to-ER transport of dilysine-tagged proteins. In mammals, the coatomer can only be recruited by membranes associated to ADP-ribosylation factors (ARFs), which are small GTP-binding proteins; the complex also influences the Golgi structural integrity, as well as the processing, activity, and endocytic recycling of LDL receptors. Functionally, this coatomer complex protein, essential for Golgi budding and vesicular trafficking, is a selective binding protein (RACK) for protein kinase C, epsilon type. It binds to Golgi membranes in a GTP-dependent manner. The chain is Coatomer subunit beta' (Copb2) from Mus musculus (Mouse).